Reading from the N-terminus, the 437-residue chain is Adenosylhomocysteinase (437 aa).

Positions 54, 130, and 155 each coordinate substrate. 156-158 (TTT) serves as a coordination point for NAD(+). Substrate contacts are provided by K185 and D189. NAD(+) contacts are provided by residues N190, 219–224 (GYGDVG), E242, N277, 298–300 (IGH), and N345.

This sequence belongs to the adenosylhomocysteinase family. Homotetramer. It depends on NAD(+) as a cofactor.

Its subcellular location is the cytoplasm. The catalysed reaction is S-adenosyl-L-homocysteine + H2O = L-homocysteine + adenosine. It participates in amino-acid biosynthesis; L-homocysteine biosynthesis; L-homocysteine from S-adenosyl-L-homocysteine: step 1/1. In terms of biological role, adenosylhomocysteine is a competitive inhibitor of S-adenosyl-L-methionine-dependent methyl transferase reactions; therefore adenosylhomocysteinase may play a key role in the control of methylations via regulation of the intracellular concentration of adenosylhomocysteine. The sequence is that of Adenosylhomocysteinase from Leishmania donovani.